Reading from the N-terminus, the 167-residue chain is Large ribosomal subunit protein uL10 (167 aa).

It belongs to the universal ribosomal protein uL10 family. Part of the ribosomal stalk of the 50S ribosomal subunit. The N-terminus interacts with L11 and the large rRNA to form the base of the stalk. The C-terminus forms an elongated spine to which L12 dimers bind in a sequential fashion forming a multimeric L10(L12)X complex.

Forms part of the ribosomal stalk, playing a central role in the interaction of the ribosome with GTP-bound translation factors. This chain is Large ribosomal subunit protein uL10, found in Alkaliphilus oremlandii (strain OhILAs) (Clostridium oremlandii (strain OhILAs)).